Consider the following 435-residue polypeptide: 5-methylthioadenosine/S-adenosylhomocysteine deaminase (435 aa).

Positions 65 and 67 each coordinate Zn(2+). Residues Glu-94, Arg-150, and His-189 each contribute to the substrate site. His-216 is a Zn(2+) binding site. The substrate site is built by Glu-219 and Asp-304. Asp-304 is a binding site for Zn(2+).

Belongs to the metallo-dependent hydrolases superfamily. MTA/SAH deaminase family. Zn(2+) serves as cofactor.

It carries out the reaction S-adenosyl-L-homocysteine + H2O + H(+) = S-inosyl-L-homocysteine + NH4(+). The enzyme catalyses S-methyl-5'-thioadenosine + H2O + H(+) = S-methyl-5'-thioinosine + NH4(+). Its function is as follows. Catalyzes the deamination of 5-methylthioadenosine and S-adenosyl-L-homocysteine into 5-methylthioinosine and S-inosyl-L-homocysteine, respectively. Is also able to deaminate adenosine. This Bacillus thuringiensis (strain Al Hakam) protein is 5-methylthioadenosine/S-adenosylhomocysteine deaminase.